The sequence spans 1480 residues: MQRSPLEKASVVSKLFFSWTRPILKKGYRQRLELSDIYQIPSANSADNLSEKLEREWDRELASKKNPKLINALRRCFFWRFMFYGILLYLGEVTKAVQPLLLGRIIASYDPDNKTERSIAIYLGIGLCLLFIVRTLLLHPAIFGLHHIGMQMRIAMFSLIYKKTLKLSSRVLDKISIGQLVSLLSNNLNKFDEGLALAHFVWIAPLQVALLMGLIWELLQASAFCGLGFLIVLALFQAGLGRMMMKYRDQRAGKINERLVITSEMIENIQSVKAYCWEEAMEKMIENLRQTELKLTRKAAYVRYFNSSAFFFSGFFVVFLSVLPYALIKGIVLRKIFTTISFCIVLRMAVTRQFPWAVQTWYDSLGAINKIQDFLQKQEYKTLEYNLTTTEVVMENVTAFWEEGFGELFEKAKQNSNNRKTSNGDDNLFFSNFSLLGTPVLKDINFKIERGQLLAVAGSTGAGKTSLLMMIMGELEPSEGKIKHSGRISFCSQFSWIMPGTIKENIIFGVSYDEYRYRSVIKACQLEEDISKFAAKDNIVLGEGGITLSGGQRARISLARAVYKDADLYLLDSPFGYLDVLTEKEIFESCVCKLMANKTRILVTSKMEHLKKADKILILHEGSSYFYGTFSELQNLRPDFSSKLMGYDSFDQFSSERRNSILTETLRRFSLEGDAPVSWTETKKQSFKQTGELGDKRKNSILNSINSIRKFSIVQKTPLQMNGIEENSDEPLERRLSLVPDSEQGEAILPRISVINTGPALQLRRRQSVLNMMTHSVNQGQSVHRKTTASTRKVSLAPQANLTELDIYSRRLSQETGLEISEEINEEDLKECFFDNMESIPAVTTWNTYLRYITLHKSLIFVLIWCLVIFLAEVAASLVVLWFLGNTPFQDKGNSTYSRNNSYAVIITNTSSYYVFYIYVGVADTLLALGFFRGLPLVHTLITVSKILHHKMLHSVLQAPMSTLNTLKAGGILNRFSKDIAILDDLLPLTIFDFIQLLLIVIGAIAVVSVLQPYILLATVPVIAAFILLRAYFLQTSQQLKQLESAGRSPIFTHLVTSLKGLWTIRAFGRQPYFETLFHKALNLHTANWFLYLATLRWFQMRIEIIFVIFFIAVTFISILTTGEGEGTVGIILTLAMNIMSTLQWAVNSSIDVDSLMRSVSRVFKFIDMPTEGKPTKSTKAYKNGQLSKVMIIENSHVKKNDIWPSGGQMTIKDLTAKYIEGGNAILENISFSISPGQRVGLLGRTGSGKSTLLSAFLRLLNTEGEIQIDGVSWDSITLQQWRKAFGVIPQKVFIFTGTFRKNLDPYEQWSDQEIWKVADEVGLRSVIEQFPGKLDFVLVDGGCVLSHGHKQLMCLARSVLSKAKILLLDEPSAHLDPVTYQIIRRALKQAFADCTVILCEHRIEAMLECQQFLVIEENKVRQYDSIQKLLNEKSLFQQAISHSDRVKLFPHRNSSKYKSPPQIASLKEETEEEVQETRL.

Residues 1–77 (MQRSPLEKAS…KLINALRRCF (77 aa)) are Cytoplasmic-facing. Residues 78 to 98 (FWRFMFYGILLYLGEVTKAVQ) traverse the membrane as a helical segment. In terms of domain architecture, ABC transmembrane type-1 1 spans 81–365 (FMFYGILLYL…WAVQTWYDSL (285 aa)). The Extracellular portion of the chain corresponds to 99–122 (PLLLGRIIASYDPDNKTERSIAIY). Residues 123–146 (LGIGLCLLFIVRTLLLHPAIFGLH) traverse the membrane as a helical segment. Residues 147–195 (HIGMQMRIAMFSLIYKKTLKLSSRVLDKISIGQLVSLLSNNLNKFDEGL) lie on the Cytoplasmic side of the membrane. The helical transmembrane segment at 196–216 (ALAHFVWIAPLQVALLMGLIW) threads the bilayer. The Extracellular segment spans residues 217-222 (ELLQAS). The chain crosses the membrane as a helical span at residues 223-243 (AFCGLGFLIVLALFQAGLGRM). At 244-298 (MMKYRDQRAGKINERLVITSEMIENIQSVKAYCWEEAMEKMIENLRQTELKLTRK) the chain is on the cytoplasmic side. The chain crosses the membrane as a helical span at residues 299-319 (AAYVRYFNSSAFFFSGFFVVF). The Extracellular portion of the chain corresponds to 320-339 (LSVLPYALIKGIVLRKIFTT). A helical membrane pass occupies residues 340-358 (ISFCIVLRMAVTRQFPWAV). At 359–858 (QTWYDSLGAI…YLRYITLHKS (500 aa)) the chain is on the cytoplasmic side. ATP contacts are provided by residues Trp401, Ser434, 458–465 (GSTGAGKT), and Gln493. The region spanning 423 to 646 (NGDDNLFFSN…RPDFSSKLMG (224 aa)) is the ABC transporter 1 domain. Cys524 carries S-palmitoyl cysteine lipidation. A phosphoserine mark is found at Ser549 and Ser660. The segment at 654–831 (SSERRNSILT…EEINEEDLKE (178 aa)) is disordered R region. Position 670 is a phosphoserine; by PKA (Ser670). Phosphoserine is present on Ser686. Lys688 is covalently cross-linked (Glycyl lysine isopeptide (Lys-Gly) (interchain with G-Cter in ubiquitin)). Ser700 and Ser712 each carry phosphoserine. At Thr717 the chain carries Phosphothreonine. 6 positions are modified to phosphoserine: Ser737, Ser753, Ser768, Ser790, Ser795, and Ser813. The chain crosses the membrane as a helical span at residues 859–879 (LIFVLIWCLVIFLAEVAASLV). One can recognise an ABC transmembrane type-1 2 domain in the interval 859-1155 (LIFVLIWCLV…AVNSSIDVDS (297 aa)). The Extracellular segment spans residues 880-918 (VLWFLGNTPFQDKGNSTYSRNNSYAVIITNTSSYYVFYI). 3 N-linked (GlcNAc...) asparagine glycosylation sites follow: Asn894, Asn900, and Asn909. The chain crosses the membrane as a discontinuously helical span at residues 919–939 (YVGVADTLLALGFFRGLPLVH). The Cytoplasmic portion of the chain corresponds to 940 to 990 (TLITVSKILHHKMLHSVLQAPMSTLNTLKAGGILNRFSKDIAILDDLLPLT). The chain crosses the membrane as a helical span at residues 991 to 1011 (IFDFIQLLLIVIGAIAVVSVL). Over 1012 to 1013 (QP) the chain is Extracellular. The chain crosses the membrane as a helical span at residues 1014–1034 (YILLATVPVIAAFILLRAYFL). The Cytoplasmic segment spans residues 1035 to 1095 (QTSQQLKQLE…TANWFLYLAT (61 aa)). A helical transmembrane segment spans residues 1096 to 1116 (LRWFQMRIEIIFVIFFIAVTF). Residues 1117 to 1130 (ISILTTGEGEGTVG) are Extracellular-facing. Residues 1131-1151 (IILTLAMNIMSTLQWAVNSSI) traverse the membrane as a helical segment. Residues 1152 to 1480 (DVDSLMRSVS…TEEEVQETRL (329 aa)) are Cytoplasmic-facing. The 234-residue stretch at 1210–1443 (MTIKDLTAKY…KSLFQQAISH (234 aa)) folds into the ABC transporter 2 domain. ATP is bound by residues Tyr1219 and 1244-1251 (GRTGSGKS). Residues 1386-1480 (RALKQAFADC…TEEEVQETRL (95 aa)) are interaction with GORASP2. Cys1395 is lipidated: S-palmitoyl cysteine. Phosphoserine occurs at positions 1444 and 1456. Positions 1452–1480 (HRNSSKYKSPPQIASLKEETEEEVQETRL) are disordered. Over residues 1470 to 1480 (ETEEEVQETRL) the composition is skewed to acidic residues. Residues 1478–1480 (TRL) carry the PDZ-binding motif.

The protein belongs to the ABC transporter superfamily. ABCC family. CFTR transporter (TC 3.A.1.202) subfamily. Monomer; does not require oligomerization for channel activity. May form oligomers in the membrane. Interacts with SLC26A3, SLC26A6 and NHERF1. Interacts with SHANK2. Interacts with MYO6. Interacts (via C-terminus) with GOPC (via PDZ domain); this promotes CFTR internalization and thereby decreases channel activity. Interacts with SLC4A7 through NHERF1. Found in a complex with MYO5B and RAB11A. Interacts with ANO1. Interacts with SLC26A8. Interacts with AHCYL1; the interaction increases CFTR activity. Interacts with CSE1L. The core-glycosylated form interacts with GORASP2 (via PDZ GRASP-type 1 domain) in respone to ER stress. Interacts with MARCHF2; the interaction leads to CFTR ubiqtuitination and degradation. Interacts with ADGRG2. Post-translationally, N-glycosylated. In terms of processing, phosphorylated; cAMP treatment promotes phosphorylation and activates the channel. Dephosphorylation decreases the ATPase activity (in vitro). Phosphorylation at PKA sites activates the channel. Phosphorylation at PKC sites enhances the response to phosphorylation by PKA. Phosphorylated by AMPK; this inhibits channel activity. Ubiquitinated, leading to its degradation in the lysosome. Deubiquitination by USP10 in early endosomes enhances its endocytic recycling to the cell membrane. Ubiquitinated by RNF185 during ER stress. Ubiquitinated by MARCHF2.

Its subcellular location is the apical cell membrane. It is found in the early endosome membrane. The protein localises to the cell membrane. It localises to the recycling endosome membrane. The protein resides in the endoplasmic reticulum membrane. Its subcellular location is the nucleus. It carries out the reaction ATP + H2O + closed Cl(-) channel = ADP + phosphate + open Cl(-) channel.. The enzyme catalyses chloride(in) = chloride(out). The catalysed reaction is hydrogencarbonate(in) = hydrogencarbonate(out). It catalyses the reaction ATP + H2O = ADP + phosphate + H(+). Epithelial ion channel that plays an important role in the regulation of epithelial ion and water transport and fluid homeostasis. Mediates the transport of chloride ions across the cell membrane. Possesses an intrinsic ATPase activity and utilizes ATP to gate its channel; the passive flow of anions through the channel is gated by cycles of ATP binding and hydrolysis by the ATP-binding domains. The ion channel is also permeable to HCO(3)(-); selectivity depends on the extracellular chloride concentration. Exerts its function also by modulating the activity of other ion channels and transporters. Contributes to the regulation of the pH and the ion content of the epithelial fluid layer. Modulates the activity of the epithelial sodium channel (ENaC) complex, in part by regulating the cell surface expression of the ENaC complex. May regulate bicarbonate secretion and salvage in epithelial cells by regulating the transporter SLC4A7. Can inhibit the chloride channel activity of ANO1. Plays a role in the chloride and bicarbonate homeostasis during sperm epididymal maturation and capacitation. The polypeptide is Cystic fibrosis transmembrane conductance regulator (Ateles geoffroyi (Black-handed spider monkey)).